Consider the following 693-residue polypeptide: Translation factor GUF1 homolog, mitochondrial (693 aa).

A compositionally biased stretch (polar residues) spans serine 51–threonine 63. The tract at residues serine 51 to lysine 78 is disordered. Residues glutamine 88–proline 270 enclose the tr-type G domain. Residues alanine 97–serine 104, aspartate 163–histidine 167, and asparagine 217–aspartate 220 contribute to the GTP site.

It belongs to the TRAFAC class translation factor GTPase superfamily. Classic translation factor GTPase family. LepA subfamily.

The protein localises to the mitochondrion inner membrane. The catalysed reaction is GTP + H2O = GDP + phosphate + H(+). In terms of biological role, promotes mitochondrial protein synthesis. May act as a fidelity factor of the translation reaction, by catalyzing a one-codon backward translocation of tRNAs on improperly translocated ribosomes. Binds to mitochondrial ribosomes in a GTP-dependent manner. The protein is Translation factor GUF1 homolog, mitochondrial of Phaeodactylum tricornutum (strain CCAP 1055/1).